Consider the following 288-residue polypeptide: uncharacterized protein (288 aa).

Residues Met-1 to Gly-12 are compositionally biased toward basic and acidic residues. The interval Met-1–Asp-20 is disordered.

It belongs to the class IV-like SAM-binding methyltransferase superfamily. RNA methyltransferase TrmH family.

This is an uncharacterized protein from Mycobacterium tuberculosis (strain ATCC 25618 / H37Rv).